Here is a 182-residue protein sequence, read N- to C-terminus: Antigenic integral membrane glycoprotein (182 aa).

A signal peptide spans 1–35 (MFSFHERMKKKHVTIRVYKHERILVFLFVLFISTT). N-linked (GlcNAc...) asparagine glycans are attached at residues asparagine 88 and asparagine 120. A helical membrane pass occupies residues 162–180 (EFLMSSCIVITLNLFIFMY). The S-palmitoyl cysteine moiety is linked to residue cysteine 168.

It localises to the cell membrane. Major antigen in the surface tegument. The protein is Antigenic integral membrane glycoprotein of Schistosoma mansoni (Blood fluke).